A 286-amino-acid polypeptide reads, in one-letter code: GTP cyclohydrolase MptA (286 aa).

This sequence belongs to the GTP cyclohydrolase IV family. As to quaternary structure, homodimer. It depends on Fe(2+) as a cofactor.

The enzyme catalyses GTP + H2O = 7,8-dihydroneopterin 2',3'-cyclic phosphate + formate + diphosphate + H(+). The protein operates within cofactor biosynthesis; 5,6,7,8-tetrahydromethanopterin biosynthesis. In terms of biological role, converts GTP to 7,8-dihydro-D-neopterin 2',3'-cyclic phosphate, the first intermediate in the biosynthesis of coenzyme methanopterin. This chain is GTP cyclohydrolase MptA, found in Thermoplasma acidophilum (strain ATCC 25905 / DSM 1728 / JCM 9062 / NBRC 15155 / AMRC-C165).